We begin with the raw amino-acid sequence, 150 residues long: uncharacterized protein (150 aa).

A disordered region spans residues 49–88 (KEWAENASTDEIDDFLTHDDETERDADPSSGSGPELMNKA). Residues 63-75 (FLTHDDETERDAD) show a composition bias toward basic and acidic residues.

This is an uncharacterized protein from Bacillus subtilis (strain 168).